Here is a 175-residue protein sequence, read N- to C-terminus: Beta-carotene hydroxylase (175 aa).

Residues 11–136 (FVTVIGMEVI…RGKEGCVSFG (126 aa)) form the Fatty acid hydroxylase domain.

This sequence belongs to the sterol desaturase family.

The enzyme catalyses all-trans-beta-carotene + 4 reduced [2Fe-2S]-[ferredoxin] + 2 O2 + 4 H(+) = all-trans-zeaxanthin + 4 oxidized [2Fe-2S]-[ferredoxin] + 2 H2O. Its pathway is carotenoid biosynthesis; zeaxanthin biosynthesis. Functionally, catalyzes the hydroxylation reaction from beta-carotene to zeaxanthin. In Pantoea ananas (Erwinia uredovora), this protein is Beta-carotene hydroxylase (crtZ).